Reading from the N-terminus, the 285-residue chain is Pseudouridine-5'-phosphate glycosidase (285 aa).

The active-site Proton donor is the E17. Substrate-binding residues include K77 and V97. D126 serves as a coordination point for Mn(2+). 128-130 (SQD) contacts substrate. K147 serves as the catalytic Nucleophile.

Belongs to the pseudouridine-5'-phosphate glycosidase family. As to quaternary structure, homotrimer. Mn(2+) serves as cofactor.

The enzyme catalyses D-ribose 5-phosphate + uracil = psi-UMP + H2O. Its function is as follows. Catalyzes the reversible cleavage of pseudouridine 5'-phosphate (PsiMP) to ribose 5-phosphate and uracil. Functions biologically in the cleavage direction, as part of a pseudouridine degradation pathway. The protein is Pseudouridine-5'-phosphate glycosidase of Thermotoga maritima (strain ATCC 43589 / DSM 3109 / JCM 10099 / NBRC 100826 / MSB8).